Reading from the N-terminus, the 168-residue chain is Photosystem I assembly protein Ycf3 (168 aa).

TPR repeat units lie at residues 35–68 (AFTY…EIDP), 72–105 (SYIL…NSFL), and 120–153 (GEQA…TPGN).

It belongs to the Ycf3 family.

Its subcellular location is the plastid. The protein resides in the chloroplast thylakoid membrane. Its function is as follows. Essential for the assembly of the photosystem I (PSI) complex. May act as a chaperone-like factor to guide the assembly of the PSI subunits. This is Photosystem I assembly protein Ycf3 from Jasminum nudiflorum (Winter jasmine).